Here is a 537-residue protein sequence, read N- to C-terminus: Aminopeptidase Y (537 aa).

The signal sequence occupies residues 1–21 (MHFSLKQLAVAAFYATNLGSA). A propeptide spanning residues 22 to 56 (YVIPQFFQEAFQQEEPIENYLPQLNDDDSSAVAAN) is cleaved from the precursor. Residues asparagine 85, asparagine 96, asparagine 115, asparagine 150, and asparagine 162 are each glycosylated (N-linked (GlcNAc...) asparagine). Zn(2+) is bound by residues histidine 314 and aspartate 326. Glutamate 358 (proton acceptor) is an active-site residue. Residue glutamate 359 coordinates Zn(2+). A glycan (N-linked (GlcNAc...) asparagine) is linked at asparagine 371. Position 387 (aspartate 387) interacts with Zn(2+). N-linked (GlcNAc...) asparagine glycosylation occurs at asparagine 427. Residue histidine 472 participates in Zn(2+) binding. N-linked (GlcNAc...) asparagine glycosylation is present at asparagine 480.

Belongs to the peptidase M28 family. M28A subfamily. As to quaternary structure, monomer. Requires Zn(2+) as cofactor.

It is found in the vacuole. It carries out the reaction Preferentially, release of N-terminal lysine.. The sequence is that of Aminopeptidase Y (APE3) from Saccharomyces cerevisiae (strain ATCC 204508 / S288c) (Baker's yeast).